The sequence spans 380 residues: Succinyl-diaminopimelate desuccinylase (380 aa).

His-69 lines the Zn(2+) pocket. Residue Asp-71 is part of the active site. Asp-102 lines the Zn(2+) pocket. Catalysis depends on Glu-135, which acts as the Proton acceptor. The Zn(2+) site is built by Glu-136, Glu-164, and His-353.

It belongs to the peptidase M20A family. DapE subfamily. In terms of assembly, homodimer. Requires Zn(2+) as cofactor. Co(2+) serves as cofactor.

The catalysed reaction is N-succinyl-(2S,6S)-2,6-diaminopimelate + H2O = (2S,6S)-2,6-diaminopimelate + succinate. Its pathway is amino-acid biosynthesis; L-lysine biosynthesis via DAP pathway; LL-2,6-diaminopimelate from (S)-tetrahydrodipicolinate (succinylase route): step 3/3. Its function is as follows. Catalyzes the hydrolysis of N-succinyl-L,L-diaminopimelic acid (SDAP), forming succinate and LL-2,6-diaminopimelate (DAP), an intermediate involved in the bacterial biosynthesis of lysine and meso-diaminopimelic acid, an essential component of bacterial cell walls. The polypeptide is Succinyl-diaminopimelate desuccinylase (Cereibacter sphaeroides (strain ATCC 17025 / ATH 2.4.3) (Rhodobacter sphaeroides)).